The chain runs to 56 residues: Arcadin-3 (56 aa).

Its subcellular location is the cytoplasm. It localises to the cytoskeleton. Functionally, part of an actin-like archaeal cytoskeleton. The sequence is that of Arcadin-3 from Pyrobaculum calidifontis (strain DSM 21063 / JCM 11548 / VA1).